The chain runs to 138 residues: Phosphoribosyl-AMP cyclohydrolase (138 aa).

Residue D84 participates in Mg(2+) binding. C85 is a binding site for Zn(2+). Residues D86 and D88 each coordinate Mg(2+). The Zn(2+) site is built by C102 and C109.

The protein belongs to the PRA-CH family. As to quaternary structure, homodimer. Mg(2+) serves as cofactor. Requires Zn(2+) as cofactor.

Its subcellular location is the cytoplasm. The catalysed reaction is 1-(5-phospho-beta-D-ribosyl)-5'-AMP + H2O = 1-(5-phospho-beta-D-ribosyl)-5-[(5-phospho-beta-D-ribosylamino)methylideneamino]imidazole-4-carboxamide. It participates in amino-acid biosynthesis; L-histidine biosynthesis; L-histidine from 5-phospho-alpha-D-ribose 1-diphosphate: step 3/9. Functionally, catalyzes the hydrolysis of the adenine ring of phosphoribosyl-AMP. This Burkholderia lata (strain ATCC 17760 / DSM 23089 / LMG 22485 / NCIMB 9086 / R18194 / 383) protein is Phosphoribosyl-AMP cyclohydrolase.